A 436-amino-acid chain; its full sequence is Nucleolar protein 4-like (436 aa).

Positions 1–184 (MSDSTWMSAD…KMNDSEGMDP (184 aa)) are disordered. The segment covering 41 to 61 (SESGSGNGSSTLNPSTSSSTQ) has biased composition (low complexity). S130 carries the phosphoserine modification. Residues 160–169 (ADDDDDDHDD) are compositionally biased toward acidic residues. Over residues 170–184 (HEDNDKMNDSEGMDP) the composition is skewed to basic and acidic residues. The residue at position 295 (S295) is a Phosphoserine. A compositionally biased stretch (polar residues) spans 351–366 (QPPASLQTGNHSNGPT). Residues 351-400 (QPPASLQTGNHSNGPTDLSMKGGASTTSTTPTPTPSSTSTSRPVPTAQLS) form a disordered region. Over residues 375–396 (STTSTTPTPTPSSTSTSRPVPT) the composition is skewed to low complexity.

The polypeptide is Nucleolar protein 4-like (NOL4L) (Pongo abelii (Sumatran orangutan)).